Here is a 567-residue protein sequence, read N- to C-terminus: 2-succinyl-5-enolpyruvyl-6-hydroxy-3-cyclohexene-1-carboxylate synthase (567 aa).

The protein belongs to the TPP enzyme family. MenD subfamily. In terms of assembly, homodimer. Mg(2+) is required as a cofactor. Requires Mn(2+) as cofactor. Thiamine diphosphate serves as cofactor.

It carries out the reaction isochorismate + 2-oxoglutarate + H(+) = 5-enolpyruvoyl-6-hydroxy-2-succinyl-cyclohex-3-ene-1-carboxylate + CO2. It functions in the pathway quinol/quinone metabolism; 1,4-dihydroxy-2-naphthoate biosynthesis; 1,4-dihydroxy-2-naphthoate from chorismate: step 2/7. It participates in quinol/quinone metabolism; menaquinone biosynthesis. Its function is as follows. Catalyzes the thiamine diphosphate-dependent decarboxylation of 2-oxoglutarate and the subsequent addition of the resulting succinic semialdehyde-thiamine pyrophosphate anion to isochorismate to yield 2-succinyl-5-enolpyruvyl-6-hydroxy-3-cyclohexene-1-carboxylate (SEPHCHC). This chain is 2-succinyl-5-enolpyruvyl-6-hydroxy-3-cyclohexene-1-carboxylate synthase, found in Yersinia pseudotuberculosis serotype O:1b (strain IP 31758).